The chain runs to 1002 residues: MAELPVTELPGDALCSGRFTISTLMGGDEPPPAACDSSQPSHLTHGSTLYMRTFGYNTIDVVPAYEHYANSALPGEPRKVRPTLADLHSFLKQEGSHLHALAFDGRQGRELTDGLVEDETGTNSEKSPGEPVRFGWVKGVMIRCMLNIWGVILYLRLPWITAQAGIVLTWLIILLSVMVTSITGLSISAISTNGKVKSGGTYFLISRSLGPELGGSIGLIFAFANAVGVAMHTVGFAETVRDLLQEYGTPIVDPINDIRIIGVVTVTVLLAISLAGMEWESKAQVLFFLVIMVSFANYLVGTLIPASEDKASKGFYSYHGDIFVQNLVPDWRGIDGSFFGMFSIFFPSATGILAGANISGDLKDPAVAIPKGTLMAIFWTTISYLAISATIGSCVVRDASGDVNDTMTPGPGPCEGLACGYGWNFTECSQQRSCRYGLINYYQTMSMVSAFAPLITAGIFGATLSSALACLVSAAKVFQCLCEDQLYPLIGFFGKGYGKNREPVRGYLLAYAIAVAFIIIAELNTIAPIISNFFLCSYALINFSCFHASITNSPGWRPSFRYYSKWAALFGAVISVVIMFLLTWWAALIAIGVVLFLLLYVIYKKPEVNWGSSVQAGSYNLALSYSVGLNEVEDHIKNYRPQCLVLTGPPNFRPALVDFVSTFTQNLSLMICGHVLIGPGKQRVPELRLIASGHTKWLNKRKIKAFYSDVIAEDLRSGVQILMQASGLGRMKPNILVVGFKRNWQSAHPATVEDYIGVLHDAFDFNYGVCVMRMREGLNVSEALQTHTTPEALIQEEQASTIFQSEQGKKTIDIYWLFDDGGLTLLIPYLLHRKKRWGKCKIRVFVGGQINRMDEERKAIISLLSKFRLGFHEVHVLPDINQKPQAEHTKRFEDMIAPFRLNDGFKDEATVTEMRRDCPWKISDEEINKNRIKSLRQVRLSEILLDYSRDAALIILTLPIGRKGKCPSSLYMAWLETLSQDLRPPVLLIRGNQENVLTFYCQ.

At 1-135 (MAELPVTELP…KSPGEPVRFG (135 aa)) the chain is on the cytoplasmic side. S41 carries the phosphoserine modification. T44 is modified (phosphothreonine). Position 47 is a phosphoserine (S47). 3 positions are modified to phosphothreonine: T48, T53, and T58. Phosphoserine occurs at positions 71 and 89. T122 is subject to Phosphothreonine. A Phosphoserine modification is found at S124. Residues 136–165 (WVKGVMIRCMLNIWGVILYLRLPWITAQAG) traverse the membrane as a discontinuously helical segment. Residues L146 and W149 each coordinate Na(+). Residues 166 to 187 (IVLTWLIILLSVMVTSITGLSI) form a helical membrane-spanning segment. Topologically, residues 188–218 (SAISTNGKVKSGGTYFLISRSLGPELGGSIG) are cytoplasmic. A helical membrane pass occupies residues 219–241 (LIFAFANAVGVAMHTVGFAETVR). The Extracellular portion of the chain corresponds to 242–253 (DLLQEYGTPIVD). 2 helical membrane passes run 254–278 (PIND…AGME) and 279–301 (WESK…YLVG). The Extracellular segment spans residues 302 to 336 (TLIPASEDKASKGFYSYHGDIFVQNLVPDWRGIDG). The chain crosses the membrane as a discontinuously helical span at residues 337–358 (SFFGMFSIFFPSATGILAGANI). Residues G351, I352, and L353 each contribute to the chloride site. The Cytoplasmic portion of the chain corresponds to 359–369 (SGDLKDPAVAI). A helical membrane pass occupies residues 370 to 391 (PKGTLMAIFWTTISYLAISATI). The Extracellular segment spans residues 392–451 (GSCVVRDASGDVNDTMTPGPGPCEGLACGYGWNFTECSQQRSCRYGLINYYQTMSMVSAF). N404 carries an N-linked (GlcNAc...) asparagine glycan. Cysteines 414 and 419 form a disulfide. N424 carries an N-linked (GlcNAc...) asparagine glycan. The cysteines at positions 428 and 434 are disulfide-linked. The chain crosses the membrane as a helical span at residues 452–475 (APLITAGIFGATLSSALACLVSAA). Na(+)-binding residues include A462, S465, and S466. At 476–505 (KVFQCLCEDQLYPLIGFFGKGYGKNREPVR) the chain is on the cytoplasmic side. The helical transmembrane segment at 506–520 (GYLLAYAIAVAFIII) threads the bilayer. Residues 521–525 (AELNT) are Extracellular-facing. Residues 526 to 542 (IAPIISNFFLCSYALIN) form a helical membrane-spanning segment. Y538 is a binding site for chloride. Over 543-565 (FSCFHASITNSPGWRPSFRYYSK) the chain is Cytoplasmic. 2 helical membrane-spanning segments follow: residues 566-585 (WAAL…LTWW) and 586-597 (AALIAIGVVLFL). At 598-1002 (LLYVIYKKPE…QENVLTFYCQ (405 aa)) the chain is on the cytoplasmic side. Residues 613-628 (SVQAGSYNLALSYSVG) are scissor helix. ATP contacts are provided by L646, R653, V675, G739, L778, and N779.

This sequence belongs to the SLC12A transporter family. As to quaternary structure, homodimer; adopts a domain-swap conformation at the scissor helices connecting the transmembrane domain and C-terminal domain. Interacts with KLHL3. Interacts with IL18R1; this interaction is increased by IL18 treatment. Post-translationally, ubiquitinated; ubiquitination is essential for regulation of endocytosis. In terms of processing, phosphorylated at Thr-53, Thr-58 and Ser-71 by OXSR1/OSR1 and STK39/SPAK downstream of WNK4, promoting its activity. Phosphorylated in response to IL18. In terms of tissue distribution, expressed predominantly in kidney, including in distal tubules (at protein level). Detected at low levels in heart, lung and liver. Not detected in normal aorta, but abundantly expressed in fatty streaks and advanced atherosclerotic lesions. In atherosclerotic lesions, expressed in macrophages, smooth muscle cells and endothelial cells (at protein level).

It is found in the cell membrane. It localises to the apical cell membrane. It catalyses the reaction chloride(out) + Na(+)(out) = chloride(in) + Na(+)(in). Phosphorylation by OXSR1/OSR1 and STK39/SPAK in kidney distal convoluted tubules promotes its activity. Also activated by OXSR1/OSR1 and STK39/SPAK downstream of WNK3. Inhibited by thiazide-type diuretic metolazone. Thiazide drugs, such as polythiazide, specifically inhibit SLC12A3/NCC transporter activity by competing with chloride for binding. Functionally, electroneutral sodium and chloride ion cotransporter, which acts as a key mediator of sodium and chloride reabsorption in kidney distal convoluted tubules. Also acts as a receptor for the pro-inflammatory cytokine IL18, thereby contributing to IL18-induced cytokine production, including IFNG, IL6, IL18 and CCL2. May act either independently of IL18R1, or in a complex with IL18R1. The polypeptide is Solute carrier family 12 member 3 (Mus musculus (Mouse)).